Consider the following 496-residue polypeptide: Probable fatty acyl-CoA reductase 5 (496 aa).

The protein belongs to the fatty acyl-CoA reductase family. In terms of tissue distribution, expressed in the endodermal cell layer surrounding the central vasculature in roots. Expressed in floral organs of very young unopened buds and receptacle of siliques.

It catalyses the reaction a long-chain fatty acyl-CoA + 2 NADPH + 2 H(+) = a long-chain primary fatty alcohol + 2 NADP(+) + CoA. Functionally, catalyzes the reduction of fatty acyl-CoA to fatty alcohols. Catalyzes specifically the formation of C18:0 fatty alcohol. Provides the fatty alcohols required for synthesis of suberin in roots, seed coat and wound-induced leaf tissue. Provides the fatty alcohols required for synthesis of alkyl hydroxycinnamates in root waxes. This is Probable fatty acyl-CoA reductase 5 from Arabidopsis thaliana (Mouse-ear cress).